A 699-amino-acid polypeptide reads, in one-letter code: MLTFMELAGPTEGDGGGSVDSQLWAACAGSMSSVPPVGAAVYYFPQGHAEQASAAVDLSSARVPPLVPCRVVAVRFMADAESDEVFAKIRLVPLRPGDAVVDVGEAAAAEARREEENSRPRPTSFAKTLTQSDANNGGGFSVPRFCAETIFPELDYSSEPPVQSVCAKDVHGVEWTFRHIYRGTPRRHLLTTGWSPFVNKKQLTAGDSIVFMRDEGGNIHVGLRRAKRGFCSIGGDDESLSSIPGWDQYRGLMRRNATATATGGRTPPKGKVPPENVLTAATRATTGQPFEVLYYPRASTPEFCVRAAAVRTAMAVQWCPGMRFKMAFETEDSSRISWFMGTVAGVQASDPVRWPQSPWRLLQVTWDEPELLQNVKRVCPWLVELVSSMPNLHLPSFSPPRKKPRNPPYAELPLEGQIFTGPVFPPNPMAHDHHHHHGFPFLPFPDSSAQPAGIQGARHAQFASPFPEFHIGNLQPNLMLYAGIRLPPADRAAPAPRPPRIIISTDLTIGSPGKPDDAACSPSSGGKKIDDTKPRGFLLFGQAILTEEQIKNGNSDGRPASPNWDAEKAPNTSEGSDSGVTQGSPTKNTTPSWSLPYFGGNNISRASEYELNPGQCKVFVESETVGRSLDLSALSSFEELYACLSDMFSIGSDELRSHLVYRSPAGEVKHAGDEPFCAFVKSARKLRILTDAGSDNLGD.

Disordered regions lie at residues 108-136 (AAEA…DANN), 505-533 (TDLT…DDTK), and 551-595 (KNGN…SWSL). Over residues 110–119 (EARREEENSR) the composition is skewed to basic and acidic residues. Over residues 125–135 (FAKTLTQSDAN) the composition is skewed to polar residues. A DNA-binding region (TF-B3) is located at residues 125–227 (FAKTLTQSDA…NIHVGLRRAK (103 aa)). Over residues 570–593 (PNTSEGSDSGVTQGSPTKNTTPSW) the composition is skewed to polar residues. One can recognise a PB1 domain in the interval 613–693 (PGQCKVFVES…RKLRILTDAG (81 aa)).

The protein belongs to the ARF family. Homodimers and heterodimers.

Its subcellular location is the nucleus. Its function is as follows. Auxin response factors (ARFs) are transcriptional factors that bind specifically to the DNA sequence 5'-TGTCTC-3' found in the auxin-responsive promoter elements (AuxREs). The chain is Auxin response factor 10 (ARF10) from Oryza sativa subsp. indica (Rice).